Consider the following 85-residue polypeptide: Small ribosomal subunit protein uS12m (85 aa).

It belongs to the universal ribosomal protein uS12 family.

The protein resides in the mitochondrion matrix. It localises to the kinetoplast. Its function is as follows. Protein S12 is involved in the translation initiation step. The protein is Small ribosomal subunit protein uS12m (RPS12) of Leishmania tarentolae (Sauroleishmania tarentolae).